The primary structure comprises 244 residues: Probable H/ACA ribonucleoprotein complex subunit 1-like protein (244 aa).

2 disordered regions span residues Met1 to Asp53 and Phe145 to Glu244. 2 RGG-box regions span residues Arg4 to Gly51 and Arg153 to Gly222. Residues Arg160 to Gly173 are compositionally biased toward basic and acidic residues. Gly residues-rich tracts occupy residues Arg174–Arg201 and Phe208–Gly217. Basic and acidic residues predominate over residues Gly218 to Tyr228.

The protein belongs to the GAR1 family. As to quaternary structure, component of the small nucleolar ribonucleoprotein particle containing H/ACA-type snoRNAs (H/ACA snoRNPs).

Its subcellular location is the nucleus. It is found in the nucleolus. In terms of biological role, required for ribosome biogenesis. Part of a complex which catalyzes pseudouridylation of rRNA. This involves the isomerization of uridine such that the ribose is subsequently attached to C5, instead of the normal N1. Pseudouridine ('psi') residues may serve to stabilize the conformation of rRNAs. Involved in phase separation into sub-nucleolar condensates. Essential for normal development and also plays a role in fertility. The polypeptide is Probable H/ACA ribonucleoprotein complex subunit 1-like protein (Caenorhabditis elegans).